The following is a 380-amino-acid chain: GDP-mannose:cellobiosyl-diphosphopolyprenol alpha-mannosyltransferase (380 aa).

The protein belongs to the glycosyltransferase group 1 family. Glycosyltransferase 4 subfamily.

The enzyme catalyses beta-D-Glc-(1-&gt;4)-alpha-D-Glc-di-trans,octa-cis-undecaprenyl diphosphate + GDP-alpha-D-mannose = alpha-D-Man-(1-&gt;3)-beta-D-Glc-(1-&gt;4)-alpha-D-Glc-1-di-trans,octa-cis-undecaprenyl diphosphate + GDP + H(+). Involved in the biosynthesis of the exopolysaccharide xanthan, a polymer that is comprised of repeating pentasaccharide units with the structure of a beta-(1,4)-linked D-glucose backbone with trisaccharide side chains composed of mannose-beta-(1,4)-glucuronic acid-beta-(1,2)-mannose attached to alternate glucose residues in the backbone by alpha-(1,3) linkages. Xanthan is involved in pathogenicity but has also been used in a variety of applications as a specialty polymer for commercial applications, including food additives, where they act as viscosifying, stabilizing, emulsifying, or gelling agents. In Xanthomonas campestris, this protein is GDP-mannose:cellobiosyl-diphosphopolyprenol alpha-mannosyltransferase (gumH).